The sequence spans 177 residues: Large ribosomal subunit protein uL6 (177 aa).

The protein belongs to the universal ribosomal protein uL6 family. In terms of assembly, part of the 50S ribosomal subunit.

In terms of biological role, this protein binds to the 23S rRNA, and is important in its secondary structure. It is located near the subunit interface in the base of the L7/L12 stalk, and near the tRNA binding site of the peptidyltransferase center. This is Large ribosomal subunit protein uL6 from Vibrio campbellii (strain ATCC BAA-1116).